The primary structure comprises 505 residues: uncharacterized protein (505 aa).

Residue His431 is the Proton acceptor of the active site.

The protein belongs to the GMC oxidoreductase family. FAD is required as a cofactor.

This is an uncharacterized protein from Sinorhizobium fredii (strain NBRC 101917 / NGR234).